Reading from the N-terminus, the 242-residue chain is DnaJ homolog subfamily B member 3 (242 aa).

The region spanning 1–69 (MVDYYEVLGV…RKREVYDRCG (69 aa)) is the J domain.

Testis specific. Expression is confined to the germline without any contribution of the somatic components.

Its function is as follows. May operate as a co-chaperone of the male germ cell- and haploid stage-specific Hsp70 proteins. The sequence is that of DnaJ homolog subfamily B member 3 (Dnajb3) from Mus musculus (Mouse).